A 303-amino-acid polypeptide reads, in one-letter code: Mitochondrial substrate carrier family protein E (303 aa).

At 1 to 8 the chain is on the mitochondrial intermembrane side; it reads MENKKESS. 3 Solcar repeats span residues 6–93, 104–197, and 210–298; these read ESSL…SKQW, ESTI…CKST, and LPIP…LKYL. Residues 9 to 29 form a helical membrane-spanning segment; the sequence is LLYILTGATSGLLADSIMHPV. Topologically, residues 30 to 67 are mitochondrial matrix; it reads DTVRARVQIEKVGKSQYKGTFNALNQIIKNEGVSYLYK. A helical transmembrane segment spans residues 68–88; sequence GFPIVATATVPAHALYFLGYE. Residues 89 to 109 are Mitochondrial intermembrane-facing; the sequence is YSKQWVTDRYGKKWGESTITH. A helical membrane pass occupies residues 110-130; sequence FSAGFVADALGSLIWVPMDII. Topologically, residues 131–171 are mitochondrial matrix; sequence KQRLQVQTNTQKLNPNQTYYKGSFHAGKIILQEEGIRGLYR. A helical transmembrane segment spans residues 172-192; the sequence is GFMPALATYGPFVGIYFSVYE. Residues 193–215 lie on the Mitochondrial intermembrane side of the membrane; the sequence is KCKSTISSLLSKEKDQYLPIPYQ. Residues 216-236 traverse the membrane as a helical segment; that stretch reads LGSGFFAGAFAAAVTCPLDVI. The Mitochondrial matrix portion of the chain corresponds to 237-268; that stretch reads KTRIQVQRSTEKQIYKGMWDSFKTILKEEGPK. A helical transmembrane segment spans residues 269 to 289; it reads AFVKGMGARIWWIAPGNALTI. Over 290–303 the chain is Mitochondrial intermembrane; that stretch reads ASYEQLKYLFKDLI.

It belongs to the mitochondrial carrier (TC 2.A.29) family.

The protein localises to the mitochondrion inner membrane. Functionally, mitochondrial solute carriers shuttle metabolites, nucleotides, and cofactors through the mitochondrial inner membrane. The protein is Mitochondrial substrate carrier family protein E (mcfE) of Dictyostelium discoideum (Social amoeba).